Reading from the N-terminus, the 495-residue chain is Trimethylamine methyltransferase MttB2 (495 aa).

Position 334 (O334) is a non-standard amino acid, pyrrolysine.

This sequence belongs to the trimethylamine methyltransferase family. As to quaternary structure, can form a complex with MttC.

It catalyses the reaction Co(I)-[trimethylamine-specific corrinoid protein] + trimethylamine + H(+) = methyl-Co(III)-[trimethylamine-specific corrinoid protein] + dimethylamine. The protein operates within one-carbon metabolism; methanogenesis from trimethylamine. Its function is as follows. Catalyzes the transfer of a methyl group from trimethylamine to the corrinoid cofactor of MttC. The protein is Trimethylamine methyltransferase MttB2 (mttB2) of Methanosarcina mazei (strain ATCC BAA-159 / DSM 3647 / Goe1 / Go1 / JCM 11833 / OCM 88) (Methanosarcina frisia).